A 173-amino-acid polypeptide reads, in one-letter code: MRILSSLKTFSQSRLSWLLLLAFVVFFTLCAMYFQHVMLLAPCVMCIYERIAMLGIGVAALIGAIAPQNPVVRWLGFAAWGASSYKGLMLAIEHVNYQFNPSPFATCDLFVTFPAWAPLNQWAPNLFEAYGDCSKVVWQFLTLSMPQWLVVIFAANLLALAIFVVAQLAKTSR.

The Cytoplasmic segment spans residues 1 to 16 (MRILSSLKTFSQSRLS). The helical transmembrane segment at 17 to 33 (WLLLLAFVVFFTLCAMY) threads the bilayer. Over 34–51 (FQHVMLLAPCVMCIYERI) the chain is Periplasmic. Residues Cys43 and Cys46 are joined by a disulfide bond. The chain crosses the membrane as a helical span at residues 52–67 (AMLGIGVAALIGAIAP). The Cytoplasmic portion of the chain corresponds to 68-74 (QNPVVRW). A helical membrane pass occupies residues 75–92 (LGFAAWGASSYKGLMLAI). Over 93–147 (EHVNYQFNPSPFATCDLFVTFPAWAPLNQWAPNLFEAYGDCSKVVWQFLTLSMPQ) the chain is Periplasmic. Cys107 and Cys133 are joined by a disulfide. Residues 148–166 (WLVVIFAANLLALAIFVVA) traverse the membrane as a helical segment. Residues 167–173 (QLAKTSR) lie on the Cytoplasmic side of the membrane.

The protein belongs to the DsbB family.

The protein localises to the cell inner membrane. In terms of biological role, required for disulfide bond formation in some periplasmic proteins. Acts by oxidizing the DsbA protein. In Vibrio cholerae serotype O1 (strain ATCC 39315 / El Tor Inaba N16961), this protein is Disulfide bond formation protein B.